The chain runs to 332 residues: Lipoyl synthase (332 aa).

[4Fe-4S] cluster-binding residues include C74, C79, C85, C100, C104, C107, and S314. Residues 85 to 303 (CFGKGTATFM…EEEAYKMGFT (219 aa)) form the Radical SAM core domain.

Belongs to the radical SAM superfamily. Lipoyl synthase family. The cofactor is [4Fe-4S] cluster.

The protein resides in the cytoplasm. It catalyses the reaction [[Fe-S] cluster scaffold protein carrying a second [4Fe-4S](2+) cluster] + N(6)-octanoyl-L-lysyl-[protein] + 2 oxidized [2Fe-2S]-[ferredoxin] + 2 S-adenosyl-L-methionine + 4 H(+) = [[Fe-S] cluster scaffold protein] + N(6)-[(R)-dihydrolipoyl]-L-lysyl-[protein] + 4 Fe(3+) + 2 hydrogen sulfide + 2 5'-deoxyadenosine + 2 L-methionine + 2 reduced [2Fe-2S]-[ferredoxin]. It participates in protein modification; protein lipoylation via endogenous pathway; protein N(6)-(lipoyl)lysine from octanoyl-[acyl-carrier-protein]: step 2/2. Functionally, catalyzes the radical-mediated insertion of two sulfur atoms into the C-6 and C-8 positions of the octanoyl moiety bound to the lipoyl domains of lipoate-dependent enzymes, thereby converting the octanoylated domains into lipoylated derivatives. This chain is Lipoyl synthase, found in Paracidovorax citrulli (strain AAC00-1) (Acidovorax citrulli).